The sequence spans 524 residues: B3 domain-containing protein Os07g0183700 (524 aa).

2 disordered regions span residues 94–152 (DGEG…TSVS) and 191–232 (PLQP…FQTQ). Residues 100–109 (CAPPPSPIPA) show a composition bias toward pro residues. Composition is skewed to low complexity over residues 110-124 (GPAS…SAPA) and 200-232 (AAAA…FQTQ). The segment at residues 336–434 (SFVKPLTYTD…EMFMAVRRTR (99 aa)) is a DNA-binding region (TF-B3).

Its subcellular location is the nucleus. In Oryza sativa subsp. japonica (Rice), this protein is B3 domain-containing protein Os07g0183700.